Reading from the N-terminus, the 449-residue chain is UNC93-like protein MFSD11 (449 aa).

The helical transmembrane segment at 8–28 (LFNIIILGVAFMFMFTAFQTC) threads the bilayer. The N-linked (GlcNAc...) asparagine glycan is linked to Asn-40. Helical transmembrane passes span 53-73 (AIIY…VAIV), 74-94 (GPQL…AVFI), 96-116 (PFPW…AVLW), 138-158 (IFWA…YFAW), and 170-190 (RTVF…FFLI). Phosphoserine is present on Ser-204. 6 consecutive transmembrane segments (helical) span residues 239–259 (MLLL…FSGV), 277–297 (LIGL…SLFG), 309–329 (PVVL…FLNM), 359–379 (FLLG…LGFL), 385–405 (APAF…AFFY), and 410–430 (LLHW…ISFF).

The protein belongs to the unc-93 family.

The protein resides in the membrane. The sequence is that of UNC93-like protein MFSD11 (MFSD11) from Homo sapiens (Human).